Reading from the N-terminus, the 117-residue chain is Holo-[acyl-carrier-protein] synthase (117 aa).

Asp-8 and Glu-57 together coordinate Mg(2+).

Belongs to the P-Pant transferase superfamily. AcpS family. Requires Mg(2+) as cofactor.

It localises to the cytoplasm. It carries out the reaction apo-[ACP] + CoA = holo-[ACP] + adenosine 3',5'-bisphosphate + H(+). Transfers the 4'-phosphopantetheine moiety from coenzyme A to a Ser of acyl-carrier-protein. This is Holo-[acyl-carrier-protein] synthase from Limosilactobacillus reuteri (Lactobacillus reuteri).